A 1346-amino-acid chain; its full sequence is DNA-directed RNA polymerase subunit beta (1346 aa).

Belongs to the RNA polymerase beta chain family. In terms of assembly, the RNAP catalytic core consists of 2 alpha, 1 beta, 1 beta' and 1 omega subunit. When a sigma factor is associated with the core the holoenzyme is formed, which can initiate transcription.

It catalyses the reaction RNA(n) + a ribonucleoside 5'-triphosphate = RNA(n+1) + diphosphate. In terms of biological role, DNA-dependent RNA polymerase catalyzes the transcription of DNA into RNA using the four ribonucleoside triphosphates as substrates. In Psychromonas ingrahamii (strain DSM 17664 / CCUG 51855 / 37), this protein is DNA-directed RNA polymerase subunit beta.